The following is a 428-amino-acid chain: ORC1-type DNA replication protein 5 (428 aa).

Residues 62–66, Y219, and R231 each bind ATP; that span reads TGKSL.

Belongs to the CDC6/cdc18 family.

Involved in regulation of DNA replication. The sequence is that of ORC1-type DNA replication protein 5 (orc5) from Halobacterium salinarum (strain ATCC 700922 / JCM 11081 / NRC-1) (Halobacterium halobium).